Consider the following 222-residue polypeptide: V-type ATP synthase subunit D (222 aa).

This sequence belongs to the V-ATPase D subunit family.

Produces ATP from ADP in the presence of a proton gradient across the membrane. This is V-type ATP synthase subunit D from Acetivibrio thermocellus (strain ATCC 27405 / DSM 1237 / JCM 9322 / NBRC 103400 / NCIMB 10682 / NRRL B-4536 / VPI 7372) (Clostridium thermocellum).